The primary structure comprises 344 residues: L-erythro-3,5-diaminohexanoate dehydrogenase (344 aa).

This sequence belongs to the KDD family. In terms of assembly, homodimer.

It catalyses the reaction (3S,5S)-3,5-diaminohexanoate + NAD(+) + H2O = (5S)-5-amino-3-oxohexanoate + NH4(+) + NADH + H(+). The protein operates within amino-acid degradation; L-lysine degradation via acetate pathway. Involved in the anaerobic fermentation of lysine. Catalyzes the oxidative deamination of L-erythro-3,5-diaminohexanoate (3,5-DAH) to 3-keto-5-aminohexanoate (KAH). The protein is L-erythro-3,5-diaminohexanoate dehydrogenase of Acetoanaerobium sticklandii (strain ATCC 12662 / DSM 519 / JCM 1433 / CCUG 9281 / NCIMB 10654 / HF) (Clostridium sticklandii).